A 467-amino-acid polypeptide reads, in one-letter code: Uronate isomerase (467 aa).

It belongs to the metallo-dependent hydrolases superfamily. Uronate isomerase family.

The catalysed reaction is D-glucuronate = D-fructuronate. It carries out the reaction aldehydo-D-galacturonate = keto-D-tagaturonate. It participates in carbohydrate metabolism; pentose and glucuronate interconversion. This Solibacter usitatus (strain Ellin6076) protein is Uronate isomerase.